The primary structure comprises 192 residues: E3 ubiquitin-protein ligase RNF185 (192 aa).

Residues Met-1 to Asn-14 show a composition bias toward polar residues. The tract at residues Met-1–Ser-30 is disordered. Residues Met-1–Asp-130 lie on the Cytoplasmic side of the membrane. Low complexity predominate over residues Ser-15–Thr-27. The segment at Glu-29–Lys-80 is required for ubiquitin ligase activity and protection against ER stress-induced cell death. The RING-type zinc finger occupies Cys-39 to Lys-80. Residues Pro-90–Phe-123 form a disordered region. A helical membrane pass occupies residues Gly-131–Phe-151. The Mitochondrial intermembrane segment spans residues Asn-152–Glu-171. Residues Gln-172 to Ala-192 form a helical membrane-spanning segment.

Interacts with ATG5 and BNIP1.

It is found in the mitochondrion outer membrane. The protein resides in the endoplasmic reticulum membrane. It catalyses the reaction S-ubiquitinyl-[E2 ubiquitin-conjugating enzyme]-L-cysteine + [acceptor protein]-L-lysine = [E2 ubiquitin-conjugating enzyme]-L-cysteine + N(6)-ubiquitinyl-[acceptor protein]-L-lysine.. The protein operates within protein modification; protein ubiquitination. Its function is as follows. E3 ubiquitin-protein ligase that regulates selective mitochondrial autophagy by mediating 'Lys-63'-linked polyubiquitination of BNIP1. Acts in the endoplasmic reticulum (ER)-associated degradation (ERAD) pathway, which targets misfolded proteins that accumulate in the endoplasmic reticulum (ER) for ubiquitination and subsequent proteasome-mediated degradation. Protects cells from ER stress-induced apoptosis. Responsible for the cotranslational ubiquitination and degradation of CFTR in the ERAD pathway. Also acts as a regulator of the innate antiviral response by catalyzing 'Lys-27'-linked polyubiquitination of CGAS, thereby promoting CGAS cyclic GMP-AMP synthase activity. Preferentially associates with the E2 enzymes UBE2J1 and UBE2J2. In Rattus norvegicus (Rat), this protein is E3 ubiquitin-protein ligase RNF185 (Rnf185).